Consider the following 121-residue polypeptide: Non-specific lipid-transfer protein 9 (121 aa).

Residues Met-1–Ser-27 form the signal peptide. Disulfide bonds link Cys-31/Cys-80, Cys-41/Cys-57, Cys-58/Cys-102, and Cys-78/Cys-116.

The protein belongs to the plant LTP family.

Its function is as follows. Plant non-specific lipid-transfer proteins transfer phospholipids as well as galactolipids across membranes. May play a role in wax or cutin deposition in the cell walls of expanding epidermal cells and certain secretory tissues. This Arabidopsis thaliana (Mouse-ear cress) protein is Non-specific lipid-transfer protein 9 (LTP9).